A 95-amino-acid polypeptide reads, in one-letter code: Large ribosomal subunit protein bL25 (95 aa).

This sequence belongs to the bacterial ribosomal protein bL25 family. Part of the 50S ribosomal subunit; part of the 5S rRNA/L5/L18/L25 subcomplex. Contacts the 5S rRNA. Binds to the 5S rRNA independently of L5 and L18.

This is one of the proteins that binds to the 5S RNA in the ribosome where it forms part of the central protuberance. The polypeptide is Large ribosomal subunit protein bL25 (Shewanella baltica (strain OS223)).